Reading from the N-terminus, the 334-residue chain is Nucleoid-associated protein PMI0825 (334 aa).

This sequence belongs to the YejK family.

It is found in the cytoplasm. The protein localises to the nucleoid. The protein is Nucleoid-associated protein PMI0825 of Proteus mirabilis (strain HI4320).